We begin with the raw amino-acid sequence, 370 residues long: 3-dehydroquinate synthase (370 aa).

NAD(+) contacts are provided by residues 108–112 (GVIGD), 132–133 (TT), Lys145, and Lys154. 3 residues coordinate Zn(2+): Glu187, His249, and His267.

It belongs to the sugar phosphate cyclases superfamily. Dehydroquinate synthase family. Requires Co(2+) as cofactor. The cofactor is Zn(2+). NAD(+) serves as cofactor.

It localises to the cytoplasm. The enzyme catalyses 7-phospho-2-dehydro-3-deoxy-D-arabino-heptonate = 3-dehydroquinate + phosphate. Its pathway is metabolic intermediate biosynthesis; chorismate biosynthesis; chorismate from D-erythrose 4-phosphate and phosphoenolpyruvate: step 2/7. Functionally, catalyzes the conversion of 3-deoxy-D-arabino-heptulosonate 7-phosphate (DAHP) to dehydroquinate (DHQ). In Cereibacter sphaeroides (strain ATCC 17023 / DSM 158 / JCM 6121 / CCUG 31486 / LMG 2827 / NBRC 12203 / NCIMB 8253 / ATH 2.4.1.) (Rhodobacter sphaeroides), this protein is 3-dehydroquinate synthase.